A 343-amino-acid polypeptide reads, in one-letter code: Ribosomal RNA small subunit methyltransferase C (343 aa).

The protein belongs to the methyltransferase superfamily. RsmC family. As to quaternary structure, monomer.

It localises to the cytoplasm. It catalyses the reaction guanosine(1207) in 16S rRNA + S-adenosyl-L-methionine = N(2)-methylguanosine(1207) in 16S rRNA + S-adenosyl-L-homocysteine + H(+). In terms of biological role, specifically methylates the guanine in position 1207 of 16S rRNA in the 30S particle. The protein is Ribosomal RNA small subunit methyltransferase C of Escherichia coli (strain K12 / DH10B).